The sequence spans 340 residues: UDP-3-O-acylglucosamine N-acyltransferase (340 aa).

Catalysis depends on His-247, which acts as the Proton acceptor.

The protein belongs to the transferase hexapeptide repeat family. LpxD subfamily. In terms of assembly, homotrimer.

The enzyme catalyses a UDP-3-O-[(3R)-3-hydroxyacyl]-alpha-D-glucosamine + a (3R)-hydroxyacyl-[ACP] = a UDP-2-N,3-O-bis[(3R)-3-hydroxyacyl]-alpha-D-glucosamine + holo-[ACP] + H(+). It functions in the pathway bacterial outer membrane biogenesis; LPS lipid A biosynthesis. Catalyzes the N-acylation of UDP-3-O-acylglucosamine using 3-hydroxyacyl-ACP as the acyl donor. Is involved in the biosynthesis of lipid A, a phosphorylated glycolipid that anchors the lipopolysaccharide to the outer membrane of the cell. This is UDP-3-O-acylglucosamine N-acyltransferase from Caulobacter sp. (strain K31).